The sequence spans 400 residues: Exodeoxyribonuclease 7 large subunit (400 aa).

It belongs to the XseA family. As to quaternary structure, heterooligomer composed of large and small subunits.

Its subcellular location is the cytoplasm. The enzyme catalyses Exonucleolytic cleavage in either 5'- to 3'- or 3'- to 5'-direction to yield nucleoside 5'-phosphates.. Bidirectionally degrades single-stranded DNA into large acid-insoluble oligonucleotides, which are then degraded further into small acid-soluble oligonucleotides. In Clostridium novyi (strain NT), this protein is Exodeoxyribonuclease 7 large subunit.